Reading from the N-terminus, the 229-residue chain is Large ribosomal subunit protein uL1 (229 aa).

It belongs to the universal ribosomal protein uL1 family. Part of the 50S ribosomal subunit.

In terms of biological role, binds directly to 23S rRNA. The L1 stalk is quite mobile in the ribosome, and is involved in E site tRNA release. Functionally, protein L1 is also a translational repressor protein, it controls the translation of the L11 operon by binding to its mRNA. In Histophilus somni (strain 129Pt) (Haemophilus somnus), this protein is Large ribosomal subunit protein uL1.